Here is a 227-residue protein sequence, read N- to C-terminus: Uridylate kinase (227 aa).

Residue 11–12 coordinates ATP; it reads GS. Glycine 45 serves as a coordination point for UMP. ATP is bound by residues glycine 46 and arginine 50. Residues aspartate 67 and 114–120 contribute to the UMP site; that span reads TEPGHTT. Threonine 140, tyrosine 146, and aspartate 149 together coordinate ATP.

The protein belongs to the UMP kinase family. In terms of assembly, homohexamer.

It is found in the cytoplasm. It carries out the reaction UMP + ATP = UDP + ADP. The protein operates within pyrimidine metabolism; CTP biosynthesis via de novo pathway; UDP from UMP (UMPK route): step 1/1. Its activity is regulated as follows. Inhibited by UTP. In terms of biological role, catalyzes the reversible phosphorylation of UMP to UDP. This chain is Uridylate kinase, found in Thermoplasma volcanium (strain ATCC 51530 / DSM 4299 / JCM 9571 / NBRC 15438 / GSS1).